A 126-amino-acid chain; its full sequence is Large ribosomal subunit protein bL17 (126 aa).

Belongs to the bacterial ribosomal protein bL17 family. As to quaternary structure, part of the 50S ribosomal subunit. Contacts protein L32.

The protein is Large ribosomal subunit protein bL17 of Lysinibacillus sphaericus (strain C3-41).